Here is a 37-residue protein sequence, read N- to C-terminus: Cytochrome b6-f complex subunit 5 (37 aa).

A helical transmembrane segment spans residues 5-25 (LLCGIVLGLVPVTIAGLFVTA).

Belongs to the PetG family. In terms of assembly, the 4 large subunits of the cytochrome b6-f complex are cytochrome b6, subunit IV (17 kDa polypeptide, PetD), cytochrome f and the Rieske protein, while the 4 small subunits are PetG, PetL, PetM and PetN. The complex functions as a dimer.

Its subcellular location is the plastid. It localises to the chloroplast thylakoid membrane. Component of the cytochrome b6-f complex, which mediates electron transfer between photosystem II (PSII) and photosystem I (PSI), cyclic electron flow around PSI, and state transitions. PetG is required for either the stability or assembly of the cytochrome b6-f complex. The chain is Cytochrome b6-f complex subunit 5 from Chlamydomonas reinhardtii (Chlamydomonas smithii).